A 301-amino-acid polypeptide reads, in one-letter code: L-threonate dehydrogenase (301 aa).

Residues 6-34 and T101 each bind NAD(+); that span reads YSVAVIGLGSMGMGAAVSCINAGLTTYGI. K177 is an active-site residue. An NAD(+)-binding site is contributed by K245.

Belongs to the HIBADH-related family. L-threonate dehydrogenase subfamily.

The enzyme catalyses L-threonate + NAD(+) = 2-dehydro-L-erythronate + NADH + H(+). Its function is as follows. Catalyzes oxidation of L-threonate to 2-oxo-tetronate. Can use either NAD(+) or NADP(+) as cosubstrate, with a preference for NAD(+). The polypeptide is L-threonate dehydrogenase (Haemophilus influenzae (strain ATCC 51907 / DSM 11121 / KW20 / Rd)).